The following is a 283-amino-acid chain: Octanoyl-[GcvH]:protein N-octanoyltransferase (283 aa).

The region spanning glycine 42–tyrosine 248 is the BPL/LPL catalytic domain. The active-site Acyl-thioester intermediate is the cysteine 147.

The protein belongs to the octanoyltransferase LipL family.

It carries out the reaction N(6)-octanoyl-L-lysyl-[glycine-cleavage complex H protein] + L-lysyl-[lipoyl-carrier protein] = N(6)-octanoyl-L-lysyl-[lipoyl-carrier protein] + L-lysyl-[glycine-cleavage complex H protein]. Its pathway is protein modification; protein lipoylation via endogenous pathway; protein N(6)-(lipoyl)lysine from octanoyl-[acyl-carrier-protein]. In terms of biological role, catalyzes the amidotransfer (transamidation) of the octanoyl moiety from octanoyl-GcvH to the lipoyl domain of the E2 subunit of lipoate-dependent enzymes. The polypeptide is Octanoyl-[GcvH]:protein N-octanoyltransferase (Geobacillus kaustophilus (strain HTA426)).